We begin with the raw amino-acid sequence, 491 residues long: MIHWLKQLRSAFGVAFLWLVCLIYFTQGFRSFVWTAVSYQLKDRLQLSPSASQFVFSVAFFPWSIKPLYGIISDCIPIGGKKRTPYLVISTVLSLVPWLVLGLDSTSRSSSLYLMIFLTVQNLGSAMADVVIDAMIAEAVRLEKASFAGDLQSVSWFAMAVGGVCGSLLGGYALSNLKIETIFLLFTVLPALQLLSCALVEESPANNEPLPELLDSNEFEEKSLTSNDNYPDTSKSNTRRRKGQKKGKKGDSNGKSETQKKQSKSLASQWFQSLKAATFGLGRAFKQPIILRPMAWFFIAHITVPNLSTVMFYYQTEVLQLDAAFLGTARVVGWLGLMFGTFIYNRYLQDMTLRKSLLFAHIGLSVTILLDMVLVSRANVGYGVSDKTMVLFGSALGDAINQLKFMPFLILSGRLCPPGIEGTLFALFMSINNLGNTVGSFMGAGLASLLGISSGSFDNMFMGLAIQVFCTYIPVLFLFLIPKEATGVSAS.

6 helical membrane-spanning segments follow: residues 14 to 34 (VAFLWLVCLIYFTQGFRSFVW), 52 to 72 (SQFVFSVAFFPWSIKPLYGII), 84 to 104 (TPYLVISTVLSLVPWLVLGLD), 112 to 132 (LYLMIFLTVQNLGSAMADVVI), 154 to 174 (VSWFAMAVGGVCGSLLGGYAL), and 179 to 199 (IETIFLLFTVLPALQLLSCAL). A disordered region spans residues 222–262 (KSLTSNDNYPDTSKSNTRRRKGQKKGKKGDSNGKSETQKKQ). Residues 224–236 (LTSNDNYPDTSKS) are compositionally biased toward polar residues. Residues 237 to 248 (NTRRRKGQKKGK) show a composition bias toward basic residues. Positions 249-260 (KGDSNGKSETQK) are enriched in basic and acidic residues. The next 6 membrane-spanning stretches (helical) occupy residues 294–314 (MAWFFIAHITVPNLSTVMFYY), 323–343 (AAFLGTARVVGWLGLMFGTFI), 356–376 (SLLFAHIGLSVTILLDMVLVS), 389–411 (MVLFGSALGDAINQLKFMPFLIL), 437–457 (TVGSFMGAGLASLLGISSGSF), and 461–481 (FMGLAIQVFCTYIPVLFLFLI).

The protein belongs to the major facilitator superfamily. Folate-biopterin transporter (TC 2.A.71) family.

It localises to the membrane. Functionally, could mediate folate transport. The protein is Probable folate-biopterin transporter 4 of Arabidopsis thaliana (Mouse-ear cress).